Here is a 259-residue protein sequence, read N- to C-terminus: GTP cyclohydrolase FolE2 (259 aa).

It belongs to the GTP cyclohydrolase IV family.

The enzyme catalyses GTP + H2O = 7,8-dihydroneopterin 3'-triphosphate + formate + H(+). Its pathway is cofactor biosynthesis; 7,8-dihydroneopterin triphosphate biosynthesis; 7,8-dihydroneopterin triphosphate from GTP: step 1/1. Converts GTP to 7,8-dihydroneopterin triphosphate. The protein is GTP cyclohydrolase FolE2 of Thermotoga neapolitana (strain ATCC 49049 / DSM 4359 / NBRC 107923 / NS-E).